The following is a 183-amino-acid chain: MTSSLPTVQRVIQNALEVSQLKYSQHPRPGGAPPALIVELPGERKLKINTILSVGEHSVRVEAFVCRKPDENREDVYRFLLRRNRRLYGVAYTLDNVGDIYLVGQMALSAVDADEVDRVLGQVLEVVDSDFNALLELGFRSSIQREWQWRLSRGESLQNLQAFAHLRPTTMQSAQRDEKELGG.

The protein to M.leprae ML2442.

This is an uncharacterized protein from Mycobacterium tuberculosis (strain CDC 1551 / Oshkosh).